The sequence spans 686 residues: X-linked interleukin-1 receptor accessory protein-like 2 (686 aa).

The first 16 residues, 1-16 (MKPPFLLALVVCSVVS), serve as a signal peptide directing secretion. Residues 17–354 (TNLKMVSKRN…LLRKKDLIYK (338 aa)) lie on the Extracellular side of the membrane. The region spanning 18–132 (NLKMVSKRNS…YCMKVSMSLT (115 aa)) is the Ig-like C2-type 1 domain. Cysteines 53 and 116 form a disulfide. N-linked (GlcNAc...) asparagine glycosylation is found at Asn63, Asn120, Asn136, Asn211, and Asn328. 2 consecutive Ig-like C2-type domains span residues 141 to 232 (CYNS…LKVT) and 239 to 347 (PPKP…VLLR). Intrachain disulfides connect Cys162/Cys214 and Cys265/Cys331. A helical transmembrane segment spans residues 355–375 (IELAGGLGAIFLLLVLLVVIY). Residues 376-686 (KCYNIELMLF…KELSFTSDIW (311 aa)) are Cytoplasmic-facing. A TIR domain is found at 400–556 (KEYDAYLSYT…KFWKHLVYEM (157 aa)). The active site involves Glu488.

Belongs to the interleukin-1 receptor family. As to expression, detected at low levels in fetal and adult brain, in particular in the frontal lobe, temporal lobe and cerebellum. Detected at very low levels in skin, liver, fetal ovary and in placenta.

It localises to the membrane. The catalysed reaction is NAD(+) + H2O = ADP-D-ribose + nicotinamide + H(+). This is X-linked interleukin-1 receptor accessory protein-like 2 (IL1RAPL2) from Homo sapiens (Human).